The chain runs to 200 residues: 3-isopropylmalate dehydratase small subunit (200 aa).

It belongs to the LeuD family. LeuD type 1 subfamily. In terms of assembly, heterodimer of LeuC and LeuD.

The enzyme catalyses (2R,3S)-3-isopropylmalate = (2S)-2-isopropylmalate. The protein operates within amino-acid biosynthesis; L-leucine biosynthesis; L-leucine from 3-methyl-2-oxobutanoate: step 2/4. Its function is as follows. Catalyzes the isomerization between 2-isopropylmalate and 3-isopropylmalate, via the formation of 2-isopropylmaleate. This Haemophilus influenzae (strain ATCC 51907 / DSM 11121 / KW20 / Rd) protein is 3-isopropylmalate dehydratase small subunit (leuD).